Reading from the N-terminus, the 65-residue chain is Beta-mammal toxin Tpa2 (65 aa).

The 63-residue stretch at 2–64 folds into the LCN-type CS-alpha/beta domain; sequence KEGYLVGNDG…TWSRATNRCG (63 aa). Disulfide bonds link C12-C63, C16-C38, C24-C44, and C28-C46.

In terms of tissue distribution, expressed by the venom gland.

It is found in the secreted. Beta toxins bind voltage-independently at site-4 of sodium channels (Nav) and shift the voltage of activation toward more negative potentials thereby affecting sodium channel activation and promoting spontaneous and repetitive firing. This toxin is lethal to mice. This Tityus pachyurus (Colombian scorpion) protein is Beta-mammal toxin Tpa2.